Reading from the N-terminus, the 625-residue chain is DNA mismatch repair protein MutL (625 aa).

Belongs to the DNA mismatch repair MutL/HexB family.

Functionally, this protein is involved in the repair of mismatches in DNA. It is required for dam-dependent methyl-directed DNA mismatch repair. May act as a 'molecular matchmaker', a protein that promotes the formation of a stable complex between two or more DNA-binding proteins in an ATP-dependent manner without itself being part of a final effector complex. The protein is DNA mismatch repair protein MutL of Azorhizobium caulinodans (strain ATCC 43989 / DSM 5975 / JCM 20966 / LMG 6465 / NBRC 14845 / NCIMB 13405 / ORS 571).